The primary structure comprises 210 residues: 3-demethoxyubiquinol 3-hydroxylase (210 aa).

Glu-59, Glu-89, His-92, Glu-141, Glu-173, and His-176 together coordinate Fe cation.

Belongs to the COQ7 family. Fe cation is required as a cofactor.

It localises to the cell membrane. The catalysed reaction is a 5-methoxy-2-methyl-3-(all-trans-polyprenyl)benzene-1,4-diol + AH2 + O2 = a 3-demethylubiquinol + A + H2O. It functions in the pathway cofactor biosynthesis; ubiquinone biosynthesis. Catalyzes the hydroxylation of 2-nonaprenyl-3-methyl-6-methoxy-1,4-benzoquinol during ubiquinone biosynthesis. The polypeptide is 3-demethoxyubiquinol 3-hydroxylase (Albidiferax ferrireducens (strain ATCC BAA-621 / DSM 15236 / T118) (Rhodoferax ferrireducens)).